We begin with the raw amino-acid sequence, 405 residues long: MADTEQPPTAPTAPEPTTATPTAPIAPVAIFKKRGAKGKANLRKRPASPPPAAKDSDDDSSDFESSEDEATGQRIKRRKKNHHSAAVMASSRDHNASTNSGVTKEEQIRSNTIYEADRDAALRLDATKQDATKGSNWFDEDNEKEDLSVGNLLGRTRTMMKTKKKVGGEDDAVQNSEREPDGTYRGLANQASYIQKNPNAPNRKVGPIKAPSNIRTITITDMAPDVCKDYKQTGFCGFGDNCKFLHAREDYAHGWQLDKEWENVTKGKKNLQGTVVASADRRNKPKNTAEEEEDADAAEEALLENIPFACIICRGPYSNSPVVTRCGHYFCEACALKRYRKDPSCAACGSGTNGVFNAAKRLAKLLEKKKARAERLRREARERGEEVSEEEDEGEDEGEGAEGSD.

Disordered stretches follow at residues 1 to 114 and 162 to 184; these read MADT…NTIY and TKKK…DGTY. Residues 15–29 are compositionally biased toward low complexity; sequence EPTTATPTAPIAPVA. Residues 31–46 are compositionally biased toward basic residues; that stretch reads FKKRGAKGKANLRKRP. Positions 56 to 70 are enriched in acidic residues; that stretch reads SDDDSSDFESSEDEA. Residues 74–83 show a composition bias toward basic residues; the sequence is RIKRRKKNHH. A C3H1-type zinc finger spans residues 221-249; the sequence is DMAPDVCKDYKQTGFCGFGDNCKFLHARE. Residues 310–349 form an RING-type zinc finger; the sequence is CIICRGPYSNSPVVTRCGHYFCEACALKRYRKDPSCAACG. Basic and acidic residues predominate over residues 370-386; sequence KARAERLRREARERGEE. The segment at 370–405 is disordered; it reads KARAERLRREARERGEEVSEEEDEGEDEGEGAEGSD. The span at 387 to 405 shows a compositional bias: acidic residues; the sequence is VSEEEDEGEDEGEGAEGSD.

Belongs to the CWC24 family. In terms of assembly, associated with the spliceosome.

It localises to the nucleus. Its function is as follows. Involved in pre-mRNA splicing. This chain is Pre-mRNA-splicing factor cwc-24 (cwc-24), found in Neurospora crassa (strain ATCC 24698 / 74-OR23-1A / CBS 708.71 / DSM 1257 / FGSC 987).